The sequence spans 1104 residues: MASACQILRWALALGLGLTFKVTHAFRSQDELLSSLESYEIAFPTRVDHNGAMLAFSPPAFRRQRRGAGATTESRLFYKVAAPSTHFLLNLTRSPRLLAGHVSVEYWTREGLAWQRAARAHCLYAGHLQGQAGSSHVAVSTCGGLHGLIVADDEEYLIEPLQGGPKGHRGPEESGPHVVYKRSSLRHPHLDTACGVRDEKPWKGRPWWLRTLKPPPARPLGNESERGQLGLKRSVSRERYVETLVVADKMMVAYHGRRDVEQYVLAIMNIVAKLFQDSSLGNIVNILVTRLILLTEDQPTLEITHHAGKSLDSFCKWQKSIVSHSGHGNAIPENGVANHDTAVLITRYDICIYKNKPCGTLGLAPVGGMCERERSCSINEDIGLATAFTIAHEIGHTFGMNHDGVGNGCGARGQDPAKLMAAHITMKTNPFVWSSCSRDYITSFLDSGLGLCLNNRPPRQDFVYPTVAPGQAYDADEQCRFQHGVKSRQCKYGEVCSELWCLSKSNRCITNSIPAAEGTLCQTHTIDKGWCYKRVCVPFGSRPEGVDGAWGPWTPWGDCSRSCGGGVSSSSRHCDSPRPTIGGKYCLGERRRHRSCNTNDCPPGSQDFREMQCSEFDSVPFRGKFYTWKTYRGGGVKACSLTCLAEGFNFYTERAAAVVDGTPCRPDTVDICVSGECKHVGCDRVLGSDLREDKCRVCGGDGSACETIEGVFSPALPGTGYEDVVWIPKGSVHIFIQDLNLSLSHLALKGDQESLLLEGLPGTPQPHRLPLAGTTFHLRQGPDQAQSLEALGPINASLIIMVLAQAELPALHYRFNAPIARDALPPYSWHYAPWTKCSAQCAGGSQVQVVECRNQLDSSAVAPHYCSGHSKLPKRQRACNTEPCPPDWVVGNWSRCSRSCDAGVRSRSVVCQRRVSAAEEKALDDSACPQPRPPVLEACQGPMCPPEWATLDWSECTPSCGPGLRHRVVLCKSADQRSTLPPGHCLPAAKPPSTMRCNLRRCPPARWVTSEWGECSTQCGLGQQQRTVRCTSHTGQPSRECTEALRPSTMQQCEAKCDSVVPPGDGPEECKDVNKVAYCPLVLKFQFCSRAYFRQMCCKTCQGR.

A signal peptide spans 1–25 (MASACQILRWALALGLGLTFKVTHA). A propeptide spanning residues 26–233 (FRSQDELLSS…SERGQLGLKR (208 aa)) is cleaved from the precursor. Residues Asn90 and Asn222 are each glycosylated (N-linked (GlcNAc...) asparagine). Residues 239–457 (RYVETLVVAD…GLGLCLNNRP (219 aa)) enclose the Peptidase M12B domain. 11 disulfides stabilise this stretch: Cys315–Cys376, Cys351–Cys358, Cys370–Cys452, Cys409–Cys436, Cys479–Cys501, Cys490–Cys508, Cys496–Cys531, Cys521–Cys536, Cys559–Cys596, Cys563–Cys601, and Cys574–Cys586. His392 is a binding site for Zn(2+). Glu393 is an active-site residue. Zn(2+) is bound by residues His396 and His402. The Disintegrin domain maps to 460–546 (QDFVYPTVAP…VPFGSRPEGV (87 aa)). In terms of domain architecture, TSP type-1 1 spans 547–602 (DGAWGPWTPWGDCSRSCGGGVSSSSRHCDSPRPTIGGKYCLGERRRHRSCNTNDCP). The spacer stretch occupies residues 706 to 818 (ETIEGVFSPA…PALHYRFNAP (113 aa)). 2 N-linked (GlcNAc...) asparagine glycosylation sites follow: Asn740 and Asn795. TSP type-1 domains are found at residues 825–885 (PPYS…EPCP), 888–943 (WVVG…QGPM), 944–1003 (CPPE…RRCP), and 1004–1058 (PARW…AKCD). Cystine bridges form between Cys837/Cys879, Cys841/Cys884, and Cys852/Cys866. Asn892 is a glycosylation site (N-linked (GlcNAc...) asparagine). The PLAC domain occupies 1066–1104 (GPEECKDVNKVAYCPLVLKFQFCSRAYFRQMCCKTCQGR).

Interacts with FBN1; this interaction promotes microfibrils assembly. It depends on Zn(2+) as a cofactor. Glycosylated. Can be O-fucosylated by POFUT2 on a serine or a threonine residue found within the consensus sequence C1-X(2)-(S/T)-C2-G of the TSP type-1 repeat domains where C1 and C2 are the first and second cysteine residue of the repeat, respectively. Fucosylated repeats can then be further glycosylated by the addition of a beta-1,3-glucose residue by the glucosyltransferase, B3GALTL. Fucosylation mediates the efficient secretion of ADAMTS family members. Can also be C-glycosylated with one or two mannose molecules on tryptophan residues within the consensus sequence W-X-X-W of the TPRs, and N-glycosylated. These other glycosylations can also facilitate secretion. In terms of tissue distribution, widely expressed in adult tissues.

The protein resides in the secreted. It is found in the extracellular space. Its subcellular location is the extracellular matrix. Its function is as follows. Metalloprotease that participate in microfibrils assembly. Microfibrils are extracellular matrix components occurring independently or along with elastin in the formation of elastic tissues. This Mus musculus (Mouse) protein is A disintegrin and metalloproteinase with thrombospondin motifs 10 (Adamts10).